The chain runs to 276 residues: NADPH-dependent 7-cyano-7-deazaguanine reductase (276 aa).

Substrate is bound at residue isoleucine 83–serine 85. Serine 85–lysine 86 contacts NADPH. Residue cysteine 184 is the Thioimide intermediate of the active site. Aspartate 191 acts as the Proton donor in catalysis. Residue histidine 223 to glutamate 224 participates in substrate binding. Position 252–253 (arginine 252–glycine 253) interacts with NADPH.

The protein belongs to the GTP cyclohydrolase I family. QueF type 2 subfamily. As to quaternary structure, homodimer.

It is found in the cytoplasm. The catalysed reaction is 7-aminomethyl-7-carbaguanine + 2 NADP(+) = 7-cyano-7-deazaguanine + 2 NADPH + 3 H(+). It participates in tRNA modification; tRNA-queuosine biosynthesis. Catalyzes the NADPH-dependent reduction of 7-cyano-7-deazaguanine (preQ0) to 7-aminomethyl-7-deazaguanine (preQ1). This is NADPH-dependent 7-cyano-7-deazaguanine reductase from Ectopseudomonas mendocina (strain ymp) (Pseudomonas mendocina).